A 313-amino-acid chain; its full sequence is 3-O-acetylpapaveroxine carboxylesterase CXE2 (313 aa).

An Involved in the stabilization of the negatively charged intermediate by the formation of the oxyanion hole motif is present at residues 72-74 (HGG). Active-site residues include serine 158, aspartate 262, and histidine 292.

The protein belongs to the 'GDXG' lipolytic enzyme family.

It carries out the reaction 3-O-acetylpapaveroxine + H2O = narcotine hemiacetal + acetate + H(+). It functions in the pathway alkaloid biosynthesis. Its function is as follows. Carboxylesterase involved in the biosynthesis of the benzylisoquinoline alkaloid noscapine. Converts 3-O-acetylpapaveroxine to narcotine hemiacetal. This is 3-O-acetylpapaveroxine carboxylesterase CXE2 from Papaver somniferum (Opium poppy).